Reading from the N-terminus, the 142-residue chain is Small ribosomal subunit protein uS12 (142 aa).

This sequence belongs to the universal ribosomal protein uS12 family. As to quaternary structure, part of the 30S ribosomal subunit.

In terms of biological role, with S4 and S5 plays an important role in translational accuracy. Located at the interface of the 30S and 50S subunits. The chain is Small ribosomal subunit protein uS12 from Methanocorpusculum labreanum (strain ATCC 43576 / DSM 4855 / Z).